The following is a 935-amino-acid chain: MRLSSAGFNPQPHEVTGEKRVLNSELWHACAGPLVSLPPVGSRVVYFPQGHSEQVAASTNKEVDAHIPNYPSLHPQLICQLHNVTMHADVETDEVYAQMTLQPLNAQEQKDPYLPAELGVPSRQPTNYFCKTLTASDTSTHGGFSVPRRAAEKVFPPLDYSQQPPAQELMARDLHDNEWKFRHIFRGQPKRHLLTTGWSVFVSAKRLVAGDSVLFIWNDKNQLLLGIRRANRPQTVMPSSVLSSDSMHLGLLAAAAHAAATNSRFTIFYNPRASPSEFVIPLAKYVKAVYHTRVSVGMRFRMLFETEESSVRRYMGTITGICDLDPTRWANSHWRSVKVGWDESTAGERQPRVSLWEIEPLTTFPMYPSPFPLRLKRPWPPGLPSFHGLKEDDMGMSMSSPLMWDRGLQSLNFQGMGVNPWMQPRLDTSGLLGMQNDVYQAMAAAALQDMRGIDPAKAAASLLQFQNSPGFSMQSPSLVQPQMLQQQLSQQQQQLSQQQQQQQQLSQQQQQQLSQQQQQQLSQQQQQQLSQQQQQQAYLGVPETHQPQSQAQSQSNNHLSQQQQQVVDNHNPSASSAAVVSAMSQFGSASQPNTSPLQSMTSLCHQQSFSDTNGGNNPISPLHTLLSNFSQDESSQLLHLTRTNSAMTSSGWPSKRPAVDSSFQHSGAGNNNTQSVLEQLGQSHTSNVPPNAVSLPPFPGGRECSIEQEGSASDPHSHLLFGVNIDSSSLLMPNGMSNLRSIGIEGGDSTTLPFTSSNFNNDFSGNLAMTTPSSCIDESGFLQSSENLGSENPQSNTFVKVYKSGSFGRSLDISKFSSYHELRSELARMFGLEGQLEDPVRSGWQLVFVDRENDVLLLGDDPWPEFVSSVWCIKILSPQEVQQMGKRGLELLNSAPSSNNVDKLPSNGNCDDFGNRSDPRNLGNGIASVGGSFNY.

Residues 129–231 constitute a DNA-binding region (TF-B3); it reads FCKTLTASDT…QLLLGIRRAN (103 aa). Disordered regions lie at residues 536 to 624 and 645 to 714; these read QAYL…PLHT and SAMT…SASD. Composition is skewed to low complexity over residues 546-565 and 573-582; these read QPQS…QQQQ and SASSAAVVSA. Polar residues-rich tracts occupy residues 583-624 and 661-689; these read MSQF…PLHT and SSFQ…SNVP. In terms of domain architecture, PB1 spans 796–880; sequence NTFVKVYKSG…WCIKILSPQE (85 aa). Over residues 896–909 the composition is skewed to polar residues; sequence PSSNNVDKLPSNGN. Residues 896 to 917 form a disordered region; that stretch reads PSSNNVDKLPSNGNCDDFGNRS.

Belongs to the ARF family. As to quaternary structure, homodimers and heterodimers. Expressed in the whole plant.

The protein resides in the nucleus. Its function is as follows. Auxin response factors (ARFs) are transcriptional factors that bind specifically to the DNA sequence 5'-TGTCTC-3' found in the auxin-responsive promoter elements (AuxREs). Seems to act as transcriptional activator. Formation of heterodimers with Aux/IAA proteins may alter their ability to modulate early auxin response genes expression. Regulates both stamen and gynoecium maturation. Promotes jasmonic acid production. Partially redundant with ARF8. This is Auxin response factor 6 (ARF6) from Arabidopsis thaliana (Mouse-ear cress).